A 460-amino-acid chain; its full sequence is ATP synthase subunit beta (460 aa).

150–157 (GGAGVGKT) is a binding site for ATP.

This sequence belongs to the ATPase alpha/beta chains family. F-type ATPases have 2 components, CF(1) - the catalytic core - and CF(0) - the membrane proton channel. CF(1) has five subunits: alpha(3), beta(3), gamma(1), delta(1), epsilon(1). CF(0) has three main subunits: a(1), b(2) and c(9-12). The alpha and beta chains form an alternating ring which encloses part of the gamma chain. CF(1) is attached to CF(0) by a central stalk formed by the gamma and epsilon chains, while a peripheral stalk is formed by the delta and b chains.

The protein resides in the cell inner membrane. The catalysed reaction is ATP + H2O + 4 H(+)(in) = ADP + phosphate + 5 H(+)(out). Functionally, produces ATP from ADP in the presence of a proton gradient across the membrane. The catalytic sites are hosted primarily by the beta subunits. The protein is ATP synthase subunit beta of Salmonella gallinarum (strain 287/91 / NCTC 13346).